Consider the following 289-residue polypeptide: Oxaloacetate decarboxylase (289 aa).

A substrate-binding site is contributed by serine 50. Mg(2+) is bound at residue aspartate 88. Substrate-binding residues include arginine 159 and histidine 235.

The protein belongs to the isocitrate lyase/PEP mutase superfamily. Oxaloacetate decarboxylase family. Homotetramer; dimer of dimers. Mg(2+) is required as a cofactor.

It carries out the reaction oxaloacetate + H(+) = pyruvate + CO2. Functionally, catalyzes the decarboxylation of oxaloacetate into pyruvate. Seems to play a role in maintaining cellular concentrations of bicarbonate and pyruvate. This is Oxaloacetate decarboxylase from Pseudomonas putida (strain ATCC 47054 / DSM 6125 / CFBP 8728 / NCIMB 11950 / KT2440).